Consider the following 277-residue polypeptide: Large ribosomal subunit protein uL2 (277 aa).

Disordered stretches follow at residues 1–20 (MGIR…SVSD), 27–55 (TQPE…RHRG), and 207–277 (KAGR…RNQS). The segment covering 27–48 (TQPEKSLTTYKHSSQGRNNRGV) has biased composition (polar residues). 2 stretches are compositionally biased toward basic residues: residues 207-220 (KAGR…RPHV) and 259-277 (TRNR…RNQS).

This sequence belongs to the universal ribosomal protein uL2 family. As to quaternary structure, part of the 50S ribosomal subunit. Forms a bridge to the 30S subunit in the 70S ribosome.

Its function is as follows. One of the primary rRNA binding proteins. Required for association of the 30S and 50S subunits to form the 70S ribosome, for tRNA binding and peptide bond formation. It has been suggested to have peptidyltransferase activity; this is somewhat controversial. Makes several contacts with the 16S rRNA in the 70S ribosome. This Gloeothece citriformis (strain PCC 7424) (Cyanothece sp. (strain PCC 7424)) protein is Large ribosomal subunit protein uL2.